The chain runs to 118 residues: uncharacterized protein (118 aa).

The tract at residues 1 to 49 (MDYVGGSLKLKNVKKKPLKKKKKDSKKLAEKVQEHSSRDKSPLEENGVS) is disordered. Residues 11-25 (KNVKKKPLKKKKKDS) show a composition bias toward basic residues. The span at 26–43 (KKLAEKVQEHSSRDKSPL) shows a compositional bias: basic and acidic residues.

This is an uncharacterized protein from Schizosaccharomyces pombe (strain 972 / ATCC 24843) (Fission yeast).